We begin with the raw amino-acid sequence, 122 residues long: Large ribosomal subunit protein uL14c (122 aa).

It belongs to the universal ribosomal protein uL14 family. Part of the 50S ribosomal subunit.

It is found in the plastid. The protein resides in the chloroplast. Binds to 23S rRNA. The protein is Large ribosomal subunit protein uL14c of Capsella bursa-pastoris (Shepherd's purse).